A 244-amino-acid chain; its full sequence is Cysteine-rich secretory protein 2 (244 aa).

Residues 1 to 21 form the signal peptide; sequence MALLPVVVFLITMLLPCVLTN. The SCP domain occupies 43–170; it reads NKHNQLRKSV…SLKYYYVCQY (128 aa). Intrachain disulfides connect cysteine 190/cysteine 197, cysteine 193/cysteine 202, cysteine 206/cysteine 239, cysteine 215/cysteine 233, and cysteine 224/cysteine 237. The region spanning 206–239 is the ShKT domain; it reads CEYEDLLSNCESLKNTAGCEHQLLVEKCKATCRC.

The protein belongs to the CRISP family. Interacts with NSUN4 isoform 3. Testis.

The protein localises to the secreted. Functionally, may regulate some ion channels' activity and thereby regulate calcium fluxes during sperm capacitation. In Cavia porcellus (Guinea pig), this protein is Cysteine-rich secretory protein 2 (CRISP2).